The following is a 117-amino-acid chain: Large ribosomal subunit protein bL20 (117 aa).

Belongs to the bacterial ribosomal protein bL20 family.

Its function is as follows. Binds directly to 23S ribosomal RNA and is necessary for the in vitro assembly process of the 50S ribosomal subunit. It is not involved in the protein synthesizing functions of that subunit. This chain is Large ribosomal subunit protein bL20, found in Pelotomaculum thermopropionicum (strain DSM 13744 / JCM 10971 / SI).